The sequence spans 388 residues: Chorismate synthase (388 aa).

Residues Arg-39 and Arg-45 each coordinate NADP(+). FMN is bound by residues 132 to 134 (RSS), 251 to 252 (NA), Gly-296, 311 to 315 (KPIPT), and Arg-337.

The protein belongs to the chorismate synthase family. As to quaternary structure, homotetramer. FMNH2 serves as cofactor.

The enzyme catalyses 5-O-(1-carboxyvinyl)-3-phosphoshikimate = chorismate + phosphate. The protein operates within metabolic intermediate biosynthesis; chorismate biosynthesis; chorismate from D-erythrose 4-phosphate and phosphoenolpyruvate: step 7/7. Its function is as follows. Catalyzes the anti-1,4-elimination of the C-3 phosphate and the C-6 proR hydrogen from 5-enolpyruvylshikimate-3-phosphate (EPSP) to yield chorismate, which is the branch point compound that serves as the starting substrate for the three terminal pathways of aromatic amino acid biosynthesis. This reaction introduces a second double bond into the aromatic ring system. This is Chorismate synthase from Staphylococcus aureus (strain MRSA252).